The chain runs to 888 residues: Aconitate hydratase A (888 aa).

Residues C433, C499, and C502 each contribute to the [4Fe-4S] cluster site.

The protein belongs to the aconitase/IPM isomerase family. Monomer. Requires [4Fe-4S] cluster as cofactor.

The enzyme catalyses citrate = D-threo-isocitrate. It carries out the reaction (2S,3R)-3-hydroxybutane-1,2,3-tricarboxylate = 2-methyl-cis-aconitate + H2O. The protein operates within carbohydrate metabolism; tricarboxylic acid cycle; isocitrate from oxaloacetate: step 2/2. It participates in organic acid metabolism; propanoate degradation. Involved in the catabolism of short chain fatty acids (SCFA) via the tricarboxylic acid (TCA)(acetyl degradation route) and probably the 2-methylcitrate cycle I (propionate degradation route). Catalyzes the reversible isomerization of citrate to isocitrate via cis-aconitate. Could catalyze the hydration of 2-methyl-cis-aconitate to yield (2R,3S)-2-methylisocitrate. The apo form of AcnA functions as a RNA-binding regulatory protein. This is Aconitate hydratase A (acn) from Streptococcus mutans serotype c (strain ATCC 700610 / UA159).